A 104-amino-acid polypeptide reads, in one-letter code: uncharacterized protein (104 aa).

2 helical membrane-spanning segments follow: residues 26–46 (IGTG…FTFF) and 70–90 (GLLG…IIAI).

The protein resides in the membrane. This is an uncharacterized protein from Acanthamoeba polyphaga mimivirus (APMV).